The chain runs to 319 residues: Acetyl esterase (319 aa).

The Involved in the stabilization of the negatively charged intermediate by the formation of the oxyanion hole motif lies at 91-93 (HGG). Catalysis depends on residues S165, D262, and H292.

It belongs to the 'GDXG' lipolytic enzyme family. In terms of assembly, homodimer. Interacts with MalT and MelA.

The protein localises to the cytoplasm. In terms of biological role, displays esterase activity towards short chain fatty esters (acyl chain length of up to 8 carbons). Able to hydrolyze triacetylglycerol (triacetin) and tributyrylglycerol (tributyrin), but not trioleylglycerol (triolein) or cholesterol oleate. Negatively regulates MalT activity by antagonizing maltotriose binding. Inhibits MelA galactosidase activity. In Escherichia coli O9:H4 (strain HS), this protein is Acetyl esterase.